An 89-amino-acid chain; its full sequence is MSLTQDQKVEIIKQFGTSEKDTGKSEVQVALYTRRISDLTSHLQEHPKDKHSRRGLLMLVAKRKKILNYLKNVDIERYRKVIGELELRK.

This sequence belongs to the universal ribosomal protein uS15 family. As to quaternary structure, part of the 30S ribosomal subunit. Forms a bridge to the 50S subunit in the 70S ribosome, contacting the 23S rRNA.

In terms of biological role, one of the primary rRNA binding proteins, it binds directly to 16S rRNA where it helps nucleate assembly of the platform of the 30S subunit by binding and bridging several RNA helices of the 16S rRNA. Its function is as follows. Forms an intersubunit bridge (bridge B4) with the 23S rRNA of the 50S subunit in the ribosome. This chain is Small ribosomal subunit protein uS15, found in Chlorobium chlorochromatii (strain CaD3).